The sequence spans 278 residues: 3-methyl-2-oxobutanoate hydroxymethyltransferase (278 aa).

Mg(2+) is bound by residues aspartate 43 and aspartate 82. 3-methyl-2-oxobutanoate is bound by residues 43-44, aspartate 82, and lysine 112; that span reads DS. Position 114 (glutamate 114) interacts with Mg(2+). Residue glutamate 181 is the Proton acceptor of the active site.

Belongs to the PanB family. In terms of assembly, homodecamer; pentamer of dimers. Requires Mg(2+) as cofactor.

The protein resides in the cytoplasm. The enzyme catalyses 3-methyl-2-oxobutanoate + (6R)-5,10-methylene-5,6,7,8-tetrahydrofolate + H2O = 2-dehydropantoate + (6S)-5,6,7,8-tetrahydrofolate. It participates in cofactor biosynthesis; (R)-pantothenate biosynthesis; (R)-pantoate from 3-methyl-2-oxobutanoate: step 1/2. Its function is as follows. Catalyzes the reversible reaction in which hydroxymethyl group from 5,10-methylenetetrahydrofolate is transferred onto alpha-ketoisovalerate to form ketopantoate. The sequence is that of 3-methyl-2-oxobutanoate hydroxymethyltransferase from Desulfitobacterium hafniense (strain DSM 10664 / DCB-2).